Consider the following 181-residue polypeptide: Large ribosomal subunit protein uL5 (181 aa).

It belongs to the universal ribosomal protein uL5 family. As to quaternary structure, part of the 50S ribosomal subunit; contacts the 5S rRNA and probably tRNA. Forms a bridge to the 30S subunit in the 70S ribosome.

In terms of biological role, this is one of the proteins that bind and probably mediate the attachment of the 5S RNA into the large ribosomal subunit, where it forms part of the central protuberance. In the 70S ribosome it contacts protein S13 of the 30S subunit (bridge B1b), connecting the 2 subunits; this bridge is implicated in subunit movement. May contact the P site tRNA; the 5S rRNA and some of its associated proteins might help stabilize positioning of ribosome-bound tRNAs. The sequence is that of Large ribosomal subunit protein uL5 from Methanococcus vannielii.